The primary structure comprises 89 residues: UPF0175 protein ssl1255 (89 aa).

Belongs to the UPF0175 family.

The protein is UPF0175 protein ssl1255 of Synechocystis sp. (strain ATCC 27184 / PCC 6803 / Kazusa).